The chain runs to 142 residues: Hemoglobin subunit alpha-2 (142 aa).

One can recognise a Globin domain in the interval 2-142 (VLSAADKSNI…VSTVLTSKYR (141 aa)). Residue His-59 coordinates O2. Residue His-88 participates in heme b binding.

This sequence belongs to the globin family. Heterotetramer of two alpha chains and two beta chains. As to expression, red blood cells.

In terms of biological role, involved in oxygen transport from the lung to the various peripheral tissues. The sequence is that of Hemoglobin subunit alpha-2 from Bubalus bubalis (Domestic water buffalo).